The chain runs to 417 residues: NADH-quinone oxidoreductase subunit D (417 aa).

The protein belongs to the complex I 49 kDa subunit family. NDH-1 is composed of 14 different subunits. Subunits NuoB, C, D, E, F, and G constitute the peripheral sector of the complex.

It localises to the cell inner membrane. The enzyme catalyses a quinone + NADH + 5 H(+)(in) = a quinol + NAD(+) + 4 H(+)(out). Functionally, NDH-1 shuttles electrons from NADH, via FMN and iron-sulfur (Fe-S) centers, to quinones in the respiratory chain. The immediate electron acceptor for the enzyme in this species is believed to be ubiquinone. Couples the redox reaction to proton translocation (for every two electrons transferred, four hydrogen ions are translocated across the cytoplasmic membrane), and thus conserves the redox energy in a proton gradient. In Francisella tularensis subsp. novicida (strain U112), this protein is NADH-quinone oxidoreductase subunit D.